Reading from the N-terminus, the 51-residue chain is Basic phospholipase A2 Bfon11 (51 aa).

3 residues coordinate Ca(2+): Tyr-27, Gly-29, and Gly-31. An intrachain disulfide couples Cys-28 to Cys-43. Residue His-46 is part of the active site. Asp-47 lines the Ca(2+) pocket.

This sequence belongs to the phospholipase A2 family. Group II subfamily. D49 sub-subfamily. The cofactor is Ca(2+). Expressed by the venom gland.

The protein resides in the secreted. The enzyme catalyses a 1,2-diacyl-sn-glycero-3-phosphocholine + H2O = a 1-acyl-sn-glycero-3-phosphocholine + a fatty acid + H(+). Snake venom phospholipase A2 (PLA2) that impairs hemostasis. PLA2 catalyzes the calcium-dependent hydrolysis of the 2-acyl groups in 3-sn-phosphoglycerides. This Bothrops fonsecai (Fonseca's lancehead) protein is Basic phospholipase A2 Bfon11.